The following is a 116-amino-acid chain: MITMRCKMLTAAAVMLAMLTAGCSTLEKVVYRPDINQGNYLSPIDASKIHKGMTQQQVAYTLGTPMLQDPFGTQTWFYVFRQQPGHEKITQQTLTLTFDSSGVLTDIKNEPALTGS.

An N-terminal signal peptide occupies residues 1 to 22; it reads MITMRCKMLTAAAVMLAMLTAG. The N-palmitoyl cysteine moiety is linked to residue C23. C23 carries S-diacylglycerol cysteine lipidation.

Belongs to the BamE family. As to quaternary structure, part of the Bam complex, which is composed of the outer membrane protein BamA, and four lipoproteins BamB, BamC, BamD and BamE.

The protein localises to the cell outer membrane. In terms of biological role, part of the outer membrane protein assembly complex, which is involved in assembly and insertion of beta-barrel proteins into the outer membrane. This is Outer membrane protein assembly factor BamE from Yersinia pestis.